A 225-amino-acid polypeptide reads, in one-letter code: Phosphoribosylformylglycinamidine synthase subunit PurQ (225 aa).

One can recognise a Glutamine amidotransferase type-1 domain in the interval 4-225 (RVGVITFPGT…YSVLDSVISA (222 aa)). The Nucleophile role is filled by cysteine 87. Residues histidine 196 and glutamate 198 contribute to the active site.

As to quaternary structure, part of the FGAM synthase complex composed of 1 PurL, 1 PurQ and 2 PurS subunits.

It is found in the cytoplasm. It carries out the reaction N(2)-formyl-N(1)-(5-phospho-beta-D-ribosyl)glycinamide + L-glutamine + ATP + H2O = 2-formamido-N(1)-(5-O-phospho-beta-D-ribosyl)acetamidine + L-glutamate + ADP + phosphate + H(+). The catalysed reaction is L-glutamine + H2O = L-glutamate + NH4(+). Its pathway is purine metabolism; IMP biosynthesis via de novo pathway; 5-amino-1-(5-phospho-D-ribosyl)imidazole from N(2)-formyl-N(1)-(5-phospho-D-ribosyl)glycinamide: step 1/2. Part of the phosphoribosylformylglycinamidine synthase complex involved in the purines biosynthetic pathway. Catalyzes the ATP-dependent conversion of formylglycinamide ribonucleotide (FGAR) and glutamine to yield formylglycinamidine ribonucleotide (FGAM) and glutamate. The FGAM synthase complex is composed of three subunits. PurQ produces an ammonia molecule by converting glutamine to glutamate. PurL transfers the ammonia molecule to FGAR to form FGAM in an ATP-dependent manner. PurS interacts with PurQ and PurL and is thought to assist in the transfer of the ammonia molecule from PurQ to PurL. This Rhodococcus jostii (strain RHA1) protein is Phosphoribosylformylglycinamidine synthase subunit PurQ.